A 206-amino-acid chain; its full sequence is Glycerol-3-phosphate acyltransferase (206 aa).

6 helical membrane passes run 6-26, 57-77, 86-106, 118-138, 143-163, and 165-185; these read IFLAFLCIGVSYSLGSFPSGF, KAALIVFLIDVSKGIGSILIA, FHVICGIAALSGHIWPIWLNW, VFLGISWQVGLASLGIFMAVL, IVSLSSISAAISLPILMFLSL, and EASFLNAYIIASFAAMIMVLW.

It belongs to the PlsY family. Probably interacts with PlsX.

The protein localises to the cell inner membrane. It catalyses the reaction an acyl phosphate + sn-glycerol 3-phosphate = a 1-acyl-sn-glycero-3-phosphate + phosphate. It functions in the pathway lipid metabolism; phospholipid metabolism. Its function is as follows. Catalyzes the transfer of an acyl group from acyl-phosphate (acyl-PO(4)) to glycerol-3-phosphate (G3P) to form lysophosphatidic acid (LPA). This enzyme utilizes acyl-phosphate as fatty acyl donor, but not acyl-CoA or acyl-ACP. The sequence is that of Glycerol-3-phosphate acyltransferase from Prochlorococcus marinus (strain MIT 9211).